Reading from the N-terminus, the 381-residue chain is L-lactate dehydrogenase A-like 6B (381 aa).

NAD(+)-binding positions include 101-106 (DVDEGR) and R148. Positions 155, 187, and 218 each coordinate substrate. N187 is a binding site for NAD(+). H242 acts as the Proton acceptor in catalysis. T297 serves as a coordination point for substrate.

Belongs to the LDH/MDH superfamily. LDH family.

It catalyses the reaction (S)-lactate + NAD(+) = pyruvate + NADH + H(+). Its pathway is fermentation; pyruvate fermentation to lactate; (S)-lactate from pyruvate: step 1/1. This chain is L-lactate dehydrogenase A-like 6B (LDHAL6B), found in Bos taurus (Bovine).